The chain runs to 313 residues: Malate dehydrogenase (313 aa).

Residue 11-16 (GAGHTG) coordinates NAD(+). R86 and R92 together coordinate substrate. NAD(+) is bound by residues N99 and 122 to 124 (LTN). Residues N124 and R155 each contribute to the substrate site. Catalysis depends on H179, which acts as the Proton acceptor.

It belongs to the LDH/MDH superfamily. MDH type 3 family.

The catalysed reaction is (S)-malate + NAD(+) = oxaloacetate + NADH + H(+). Catalyzes the reversible oxidation of malate to oxaloacetate. This Staphylococcus epidermidis (strain ATCC 35984 / DSM 28319 / BCRC 17069 / CCUG 31568 / BM 3577 / RP62A) protein is Malate dehydrogenase.